Consider the following 210-residue polypeptide: Imidazoleglycerol-phosphate dehydratase (210 aa).

It belongs to the imidazoleglycerol-phosphate dehydratase family.

It localises to the cytoplasm. The catalysed reaction is D-erythro-1-(imidazol-4-yl)glycerol 3-phosphate = 3-(imidazol-4-yl)-2-oxopropyl phosphate + H2O. It functions in the pathway amino-acid biosynthesis; L-histidine biosynthesis; L-histidine from 5-phospho-alpha-D-ribose 1-diphosphate: step 6/9. In Acidovorax ebreus (strain TPSY) (Diaphorobacter sp. (strain TPSY)), this protein is Imidazoleglycerol-phosphate dehydratase.